Here is a 78-residue protein sequence, read N- to C-terminus: Probable [Fe-S]-dependent transcriptional repressor (78 aa).

4 residues coordinate iron-sulfur cluster: cysteine 56, cysteine 61, cysteine 64, and cysteine 70.

Belongs to the FeoC family.

May function as a transcriptional regulator that controls feoABC expression. The polypeptide is Probable [Fe-S]-dependent transcriptional repressor (Escherichia coli O9:H4 (strain HS)).